The primary structure comprises 434 residues: Probable oxaloacetate decarboxylase beta chain (434 aa).

9 helical membrane passes run 13–35 (IMHLELGQALMMLISLVLLWLAI), 122–144 (VLALFYKVAIGYGVAPLIIFMGV), 159–181 (TLLLGAAAQFGIFATIIGALLLN), 186–208 (ISFTLPQAAAIGIIGGADGPTAI), 223–245 (AVAAYSYMALVPLIQPPIMRALT), 266–288 (ILFPIVLVTLVALLLPDAAPLLG), 308–327 (TAQNALINIVTIFLGLAVGS), 339–361 (TLGILLLGVVAFCIGTASGVIMA), and 403–425 (FLLMHAMGPNVAGVIGSAIAAGV).

This sequence belongs to the GcdB/MmdB/OadB family. As to quaternary structure, heterotrimer of an alpha, a beta and a gamma subunit. Na(+) serves as cofactor.

It is found in the cell membrane. It carries out the reaction oxaloacetate + 2 Na(+)(in) + H(+) = pyruvate + 2 Na(+)(out) + CO2. In terms of biological role, catalyzes the decarboxylation of oxaloacetate coupled to Na(+) translocation. The chain is Probable oxaloacetate decarboxylase beta chain (oadB) from Pasteurella multocida (strain Pm70).